The primary structure comprises 354 residues: Holliday junction branch migration complex subunit RuvB (354 aa).

The tract at residues 1–24 (MSIQTDDFAPVPPPKRVVSAAPTS) is disordered. The segment at 5–195 (TDDFAPVPPP…FGIVARLEFY (191 aa)) is large ATPase domain (RuvB-L). ATP-binding positions include Leu-34, Arg-35, Gly-76, Lys-79, Thr-80, Thr-81, 142-144 (EDY), Arg-185, Tyr-195, and Arg-232. Residue Thr-80 participates in Mg(2+) binding. A small ATPAse domain (RuvB-S) region spans residues 196 to 266 (TPEELSRIVT…IAQRALAMLD (71 aa)). The tract at residues 269–354 (PQGFDVMDRK…RQHTDLFGPA (86 aa)) is head domain (RuvB-H). DNA-binding residues include Arg-324 and Arg-329.

Belongs to the RuvB family. In terms of assembly, homohexamer. Forms an RuvA(8)-RuvB(12)-Holliday junction (HJ) complex. HJ DNA is sandwiched between 2 RuvA tetramers; dsDNA enters through RuvA and exits via RuvB. An RuvB hexamer assembles on each DNA strand where it exits the tetramer. Each RuvB hexamer is contacted by two RuvA subunits (via domain III) on 2 adjacent RuvB subunits; this complex drives branch migration. In the full resolvosome a probable DNA-RuvA(4)-RuvB(12)-RuvC(2) complex forms which resolves the HJ.

The protein localises to the cytoplasm. It carries out the reaction ATP + H2O = ADP + phosphate + H(+). Functionally, the RuvA-RuvB-RuvC complex processes Holliday junction (HJ) DNA during genetic recombination and DNA repair, while the RuvA-RuvB complex plays an important role in the rescue of blocked DNA replication forks via replication fork reversal (RFR). RuvA specifically binds to HJ cruciform DNA, conferring on it an open structure. The RuvB hexamer acts as an ATP-dependent pump, pulling dsDNA into and through the RuvAB complex. RuvB forms 2 homohexamers on either side of HJ DNA bound by 1 or 2 RuvA tetramers; 4 subunits per hexamer contact DNA at a time. Coordinated motions by a converter formed by DNA-disengaged RuvB subunits stimulates ATP hydrolysis and nucleotide exchange. Immobilization of the converter enables RuvB to convert the ATP-contained energy into a lever motion, pulling 2 nucleotides of DNA out of the RuvA tetramer per ATP hydrolyzed, thus driving DNA branch migration. The RuvB motors rotate together with the DNA substrate, which together with the progressing nucleotide cycle form the mechanistic basis for DNA recombination by continuous HJ branch migration. Branch migration allows RuvC to scan DNA until it finds its consensus sequence, where it cleaves and resolves cruciform DNA. The sequence is that of Holliday junction branch migration complex subunit RuvB from Paracidovorax citrulli (strain AAC00-1) (Acidovorax citrulli).